We begin with the raw amino-acid sequence, 126 residues long: Holo-[acyl-carrier-protein] synthase (126 aa).

Residues aspartate 9 and glutamate 58 each coordinate Mg(2+).

The protein belongs to the P-Pant transferase superfamily. AcpS family. Mg(2+) is required as a cofactor.

The protein localises to the cytoplasm. It catalyses the reaction apo-[ACP] + CoA = holo-[ACP] + adenosine 3',5'-bisphosphate + H(+). Its function is as follows. Transfers the 4'-phosphopantetheine moiety from coenzyme A to a Ser of acyl-carrier-protein. The chain is Holo-[acyl-carrier-protein] synthase from Enterobacter sp. (strain 638).